A 378-amino-acid polypeptide reads, in one-letter code: Ribosomal RNA large subunit methyltransferase G (378 aa).

It belongs to the methyltransferase superfamily. RlmG family.

It is found in the cytoplasm. It catalyses the reaction guanosine(1835) in 23S rRNA + S-adenosyl-L-methionine = N(2)-methylguanosine(1835) in 23S rRNA + S-adenosyl-L-homocysteine + H(+). Functionally, specifically methylates the guanine in position 1835 (m2G1835) of 23S rRNA. This is Ribosomal RNA large subunit methyltransferase G from Escherichia coli O139:H28 (strain E24377A / ETEC).